The following is a 298-amino-acid chain: Serine/threonine-protein kinase 1 (298 aa).

In terms of domain architecture, Protein kinase spans 38-276 (FIATRPMFEG…FKSLVSHPWF (239 aa)). Residues 45–53 (FEGGRNNVF) and Lys-65 contribute to the ATP site. Asp-152 functions as the Proton acceptor in the catalytic mechanism.

Belongs to the protein kinase superfamily. Ser/Thr protein kinase family.

The protein resides in the virion. The protein localises to the host cytoplasm. The enzyme catalyses L-seryl-[protein] + ATP = O-phospho-L-seryl-[protein] + ADP + H(+). It carries out the reaction L-threonyl-[protein] + ATP = O-phospho-L-threonyl-[protein] + ADP + H(+). Functionally, essential for viral replication. It may mediate the virus progression through DNA replication. This African swine fever virus (strain Badajoz 1971 Vero-adapted) (Ba71V) protein is Serine/threonine-protein kinase 1.